A 350-amino-acid polypeptide reads, in one-letter code: Protein-glutamate methylesterase/protein-glutamine glutaminase (350 aa).

Residues 5-122 (KVLCVDDSAL…RDGLIEYSEV (118 aa)) form the Response regulatory domain. Asp56 carries the post-translational modification 4-aspartylphosphate. Residues 152–346 (PFASSEKLVI…ERILTRLGDR (195 aa)) enclose the CheB-type methylesterase domain. Active-site residues include Ser165, His191, and Asp288.

It belongs to the CheB family. Post-translationally, phosphorylated by CheA. Phosphorylation of the N-terminal regulatory domain activates the methylesterase activity.

Its subcellular location is the cytoplasm. It carries out the reaction [protein]-L-glutamate 5-O-methyl ester + H2O = L-glutamyl-[protein] + methanol + H(+). The catalysed reaction is L-glutaminyl-[protein] + H2O = L-glutamyl-[protein] + NH4(+). Functionally, involved in chemotaxis. Part of a chemotaxis signal transduction system that modulates chemotaxis in response to various stimuli. Catalyzes the demethylation of specific methylglutamate residues introduced into the chemoreceptors (methyl-accepting chemotaxis proteins or MCP) by CheR. Also mediates the irreversible deamidation of specific glutamine residues to glutamic acid. The protein is Protein-glutamate methylesterase/protein-glutamine glutaminase of Bordetella bronchiseptica (strain ATCC BAA-588 / NCTC 13252 / RB50) (Alcaligenes bronchisepticus).